The chain runs to 507 residues: Maturase K (507 aa).

Belongs to the intron maturase 2 family. MatK subfamily.

The protein localises to the plastid. Its subcellular location is the chloroplast. Usually encoded in the trnK tRNA gene intron. Probably assists in splicing its own and other chloroplast group II introns. This is Maturase K from Cananga odorata (Ylang-ylang tree).